The sequence spans 194 residues: MAIVSPNFCAPYPIELGIVRKVMTLTDGNFAVTDVNGNLLFKVKEPLFSISDKRILLDAYDTPILTLRENKVSLHDRWLVYRGKSTDQSDLLYTLKRSSMIQIMKPKLDIFLAHNKEMKICDFHVKGSWIDRSCVVYAGKSDAIVAQMHKKHTAQSILIGKSNFSVTVYPNVDFAFIVSLIVILDDINREDSED.

The protein belongs to the LOR family.

Might be related to the phospholipid scramblase and tubby-like superfamily of membrane tethered transcription factors. The protein is Protein LURP-one-related 10 of Arabidopsis thaliana (Mouse-ear cress).